A 359-amino-acid polypeptide reads, in one-letter code: MIVLGSTGSIGVNTLFIAKEKNISIEALSCGKNIKLLNEQIALFKPKFVCIQDEKDKHLVDHKNIFCAQDGLKKMISECKSKFVVNAIVGFAGLNSSLIAQKLGKTLALANKESLVVAGKFFDTSKIKAIDSEHAALKCLIDKRKDIKKLFITASGGAFYKYKIKDLKNVSVKEALKHPNWSMGAKITIDSASMCNKLFEIIEAYHLYGIKQIDAVIEKKSLVHALCEFKDGGISAYFSHANMRLSIAQAILDEHDQSFIENLDLLAMPSLKFEKISLKKYPIFMLKDELLKNPDLGVVINAANEYLVYKFLKNQMGFLDISKGIFKALDHFGVPKINQIEDVFEYDKRVRLYLDKEMK.

8 residues coordinate NADPH: Thr-7, Gly-8, Ser-9, Ile-10, Gly-31, Lys-32, Asn-33, and Asn-111. 1-deoxy-D-xylulose 5-phosphate is bound at residue Lys-112. Position 113 (Glu-113) interacts with NADPH. Asp-131 contributes to the Mn(2+) binding site. Residues Ser-132, Glu-133, Ser-155, and His-178 each coordinate 1-deoxy-D-xylulose 5-phosphate. Position 133 (Glu-133) interacts with Mn(2+). Gly-184 contacts NADPH. Residues Ser-191, Asn-196, Lys-197, and Glu-200 each coordinate 1-deoxy-D-xylulose 5-phosphate. Glu-200 serves as a coordination point for Mn(2+).

The protein belongs to the DXR family. Requires Mg(2+) as cofactor. The cofactor is Mn(2+).

It catalyses the reaction 2-C-methyl-D-erythritol 4-phosphate + NADP(+) = 1-deoxy-D-xylulose 5-phosphate + NADPH + H(+). It participates in isoprenoid biosynthesis; isopentenyl diphosphate biosynthesis via DXP pathway; isopentenyl diphosphate from 1-deoxy-D-xylulose 5-phosphate: step 1/6. Its function is as follows. Catalyzes the NADPH-dependent rearrangement and reduction of 1-deoxy-D-xylulose-5-phosphate (DXP) to 2-C-methyl-D-erythritol 4-phosphate (MEP). The protein is 1-deoxy-D-xylulose 5-phosphate reductoisomerase of Campylobacter lari (strain RM2100 / D67 / ATCC BAA-1060).